Consider the following 399-residue polypeptide: MLAEKTRSIIKATVPVLEQQGTVITRTFYKNMLTEHTELLNIFNRTNQKVGAQPNALATTVLAAAKNIDDLSVLMDHVKQIGHKHRALQIKPEHYPIVGEYLLKAIKEVLGDAATPEIINAWGEAYQAIADIFITVEKKMYEEALWPGWKPFDITAKEYVASDIVEFTVKPKFGSGIELESLPITPGQYITVNTHPIRQENQYDALRHYSLCSASTKNGLRFAVKMEAARENFPAGLVSEYLHKDAKVGDEIKLSAPAGDFAINKELIHQNEVPLVLLSSGVGVTPLLAMLEEQVKCNPNRPIYWIQSSYDEKTQAFKKHVDELLAECANVDKIIVHTDTEPLINAAFLKEKSPAHADVYTCGSLAFMQAMIGHLKELEHRDDMIHYEPFGPKMSTVQV.

The region spanning 1–138 (MLAEKTRSII…IADIFITVEK (138 aa)) is the Globin domain. Thr22 bears the Phosphothreonine mark. His85 contributes to the heme b binding site. Catalysis depends on charge relay system residues Tyr95 and Glu137. A reductase region spans residues 146-399 (WPGWKPFDIT…FGPKMSTVQV (254 aa)). Positions 147 to 264 (PGWKPFDITA…SAPAGDFAIN (118 aa)) constitute an FAD-binding FR-type domain. Residues Tyr189 and 207 to 210 (RHYS) each bind FAD. 281 to 286 (GVGVTP) contacts NADP(+). 389–392 (PFGP) is a binding site for FAD.

It belongs to the globin family. Two-domain flavohemoproteins subfamily. This sequence in the C-terminal section; belongs to the flavoprotein pyridine nucleotide cytochrome reductase family. FAD serves as cofactor. Heme b is required as a cofactor.

Its subcellular location is the cytoplasm. The enzyme catalyses 2 nitric oxide + NADPH + 2 O2 = 2 nitrate + NADP(+) + H(+). It carries out the reaction 2 nitric oxide + NADH + 2 O2 = 2 nitrate + NAD(+) + H(+). Is involved in NO detoxification in an aerobic process, termed nitric oxide dioxygenase (NOD) reaction that utilizes O(2) and NAD(P)H to convert NO to nitrate, which protects the fungus from various noxious nitrogen compounds. Therefore, plays a central role in the inducible response to nitrosative stress. Its function is as follows. In the presence of oxygen and NADH, it has NADH oxidase activity, which leads to the generation of superoxide and H(2)O(2). Under anaerobic conditions, it also exhibits nitric oxide reductase and FAD reductase activities. However, all these reactions are much lower than NOD activity. This is Flavohemoprotein (YHB1) from Saccharomyces cerevisiae (strain ATCC 204508 / S288c) (Baker's yeast).